Here is a 401-residue protein sequence, read N- to C-terminus: Succinyl-diaminopimelate desuccinylase (401 aa).

His82 contacts Zn(2+). Asp84 is a catalytic residue. A Zn(2+)-binding site is contributed by Asp115. Residue Glu149 is the Proton acceptor of the active site. Residues Glu150, Glu178, and His364 each coordinate Zn(2+).

The protein belongs to the peptidase M20A family. DapE subfamily. In terms of assembly, homodimer. The cofactor is Zn(2+). Co(2+) is required as a cofactor.

The catalysed reaction is N-succinyl-(2S,6S)-2,6-diaminopimelate + H2O = (2S,6S)-2,6-diaminopimelate + succinate. It participates in amino-acid biosynthesis; L-lysine biosynthesis via DAP pathway; LL-2,6-diaminopimelate from (S)-tetrahydrodipicolinate (succinylase route): step 3/3. In terms of biological role, catalyzes the hydrolysis of N-succinyl-L,L-diaminopimelic acid (SDAP), forming succinate and LL-2,6-diaminopimelate (DAP), an intermediate involved in the bacterial biosynthesis of lysine and meso-diaminopimelic acid, an essential component of bacterial cell walls. The chain is Succinyl-diaminopimelate desuccinylase from Verminephrobacter eiseniae (strain EF01-2).